A 65-amino-acid chain; its full sequence is Small ribosomal subunit protein bS21 (65 aa).

This sequence belongs to the bacterial ribosomal protein bS21 family.

This is Small ribosomal subunit protein bS21 from Geotalea daltonii (strain DSM 22248 / JCM 15807 / FRC-32) (Geobacter daltonii).